Here is an 85-residue protein sequence, read N- to C-terminus: Conotoxin Im28.1 (85 aa).

The first 21 residues, 1 to 21 (MPKLEMMLLVLLILPLCYIDA), serve as a signal peptide directing secretion. A propeptide spanning residues 22-40 (VGPPPPWNMEDEIIEHWQK) is cleaved from the precursor.

This sequence belongs to the conotoxin D superfamily. Contains 5 disulfide bonds. Expressed by the venom duct.

It is found in the secreted. Functionally, probable neurotoxin. This chain is Conotoxin Im28.1, found in Conus imperialis (Imperial cone).